A 360-amino-acid polypeptide reads, in one-letter code: 3-isopropylmalate dehydrogenase (360 aa).

Residue 76-89 coordinates NAD(+); that stretch reads GPKWEPLDYSLRPE. Substrate is bound by residues R96, R106, R134, and D224. Residues D224, D248, and D252 each contribute to the Mg(2+) site. 282–294 lines the NAD(+) pocket; sequence GSAPDIAGRGIAN.

It belongs to the isocitrate and isopropylmalate dehydrogenases family. LeuB type 1 subfamily. As to quaternary structure, homodimer. Mg(2+) serves as cofactor. The cofactor is Mn(2+).

The protein localises to the cytoplasm. It carries out the reaction (2R,3S)-3-isopropylmalate + NAD(+) = 4-methyl-2-oxopentanoate + CO2 + NADH. The protein operates within amino-acid biosynthesis; L-leucine biosynthesis; L-leucine from 3-methyl-2-oxobutanoate: step 3/4. Catalyzes the oxidation of 3-carboxy-2-hydroxy-4-methylpentanoate (3-isopropylmalate) to 3-carboxy-4-methyl-2-oxopentanoate. The product decarboxylates to 4-methyl-2 oxopentanoate. This Methylococcus capsulatus (strain ATCC 33009 / NCIMB 11132 / Bath) protein is 3-isopropylmalate dehydrogenase.